A 500-amino-acid polypeptide reads, in one-letter code: UDP-GalNAc:beta-1,3-N-acetylgalactosaminyltransferase 2 (500 aa).

Residues 1–6 (MRNWLV) lie on the Cytoplasmic side of the membrane. Residues 7-23 (LLCPCVLGAALHLWLRL) form a helical; Signal-anchor for type II membrane protein membrane-spanning segment. At 24–500 (RSPPPACASG…CGDPCRCQAR (477 aa)) the chain is on the lumenal side. Asn-116 and Asn-174 each carry an N-linked (GlcNAc...) asparagine glycan.

It belongs to the glycosyltransferase 31 family. In terms of processing, N-glycosylated. Expressed in all tissues examined, but at highest levels in testis, adipose tissue, skeletal muscle and ovary.

It is found in the golgi apparatus membrane. It localises to the endoplasmic reticulum. The catalysed reaction is 3-O-(N-acetyl-beta-D-glucosaminyl-(1-&gt;4)-alpha-D-mannosyl)-L-threonyl-[protein] + UDP-N-acetyl-alpha-D-galactosamine = 3-O-[beta-D-GalNAc-(1-&gt;3)-beta-D-GlcNAc-(1-&gt;4)-alpha-D-Man]-L-Thr-[protein] + UDP + H(+). The protein operates within protein modification; protein glycosylation. Functionally, beta-1,3-N-acetylgalactosaminyltransferase that synthesizes a unique carbohydrate structure, GalNAc-beta-1-3GlcNAc, on N- and O-glycans. Has no galactose nor galactosaminyl transferase activity toward any acceptor substrate. Involved in alpha-dystroglycan (DAG1) glycosylation: acts coordinately with GTDC2/POMGnT2 to synthesize a GalNAc-beta3-GlcNAc-beta-terminus at the 4-position of protein O-mannose in the biosynthesis of the phosphorylated O-mannosyl trisaccharide (N-acetylgalactosamine-beta-3-N-acetylglucosamine-beta-4-(phosphate-6-)mannose), a carbohydrate structure present in alpha-dystroglycan, which is required for binding laminin G-like domain-containing extracellular proteins with high affinity. This Homo sapiens (Human) protein is UDP-GalNAc:beta-1,3-N-acetylgalactosaminyltransferase 2 (B3GALNT2).